A 577-amino-acid chain; its full sequence is Arginine--tRNA ligase (577 aa).

The short motif at Ala132–His142 is the 'HIGH' region element.

The protein belongs to the class-I aminoacyl-tRNA synthetase family. In terms of assembly, monomer.

Its subcellular location is the cytoplasm. The enzyme catalyses tRNA(Arg) + L-arginine + ATP = L-arginyl-tRNA(Arg) + AMP + diphosphate. This Herminiimonas arsenicoxydans protein is Arginine--tRNA ligase.